A 204-amino-acid polypeptide reads, in one-letter code: MNKLRNQTLALASILQTTTLVDQLASTGACDANSNQASLKSIITSSTKLEEVFNSKQDLLVGIAALKVVLGNKTKRIQQVILYALALINLEKKLMKNQTLLNQITLEIDLIKNQEFFEISHANSVARLAQLYKSTLGGLNPRIMINGEQIYLSNKHTTNHIRALLLAGIRAVSLWKSQGGKTWHLLFNKKKILNLISSLEGLNK.

It belongs to the HflD family.

Its subcellular location is the cytoplasm. The protein resides in the cell inner membrane. This is High frequency lysogenization protein HflD homolog from Ruthia magnifica subsp. Calyptogena magnifica.